Consider the following 828-residue polypeptide: Periplasmic nitrate reductase (828 aa).

The segment at residues 1-31 is a signal peptide (tat-type signal); it reads MKLSRRSFMKANAVAAAAAAAGLSVPGVARA. The region spanning 39–95 is the 4Fe-4S Mo/W bis-MGD-type domain; sequence IKWDKAPCRFCGTGCGVLVGTQQGRVVACQGDPDAPVNRGLNCIKGYFLPKIMYGKD. The [4Fe-4S] cluster site is built by C46, C49, C53, and C81. Mo-bis(molybdopterin guanine dinucleotide) is bound by residues K83, Q150, N175, C179, 212–219, 243–247, 262–264, M372, Q376, N482, 508–509, K531, D558, and 718–727; these read WGANMAEM, STYQH, QSD, SD, and TGRVLEHWHT. Substrate is bound at residue F794. 2 residues coordinate Mo-bis(molybdopterin guanine dinucleotide): N802 and K819.

It belongs to the prokaryotic molybdopterin-containing oxidoreductase family. NasA/NapA/NarB subfamily. As to quaternary structure, component of the periplasmic nitrate reductase NapAB complex composed of NapA and NapB. [4Fe-4S] cluster serves as cofactor. It depends on Mo-bis(molybdopterin guanine dinucleotide) as a cofactor. In terms of processing, predicted to be exported by the Tat system. The position of the signal peptide cleavage has not been experimentally proven.

The protein resides in the periplasm. It carries out the reaction 2 Fe(II)-[cytochrome] + nitrate + 2 H(+) = 2 Fe(III)-[cytochrome] + nitrite + H2O. Functionally, catalytic subunit of the periplasmic nitrate reductase complex NapAB. Receives electrons from NapB and catalyzes the reduction of nitrate to nitrite. This is Periplasmic nitrate reductase from Shigella flexneri.